Reading from the N-terminus, the 923-residue chain is Helicase POLQ-like (923 aa).

The segment at 1 to 84 is disordered; that stretch reads MNRTPIRRCK…STVTPIQQKI (84 aa). Residues 43 to 55 are compositionally biased toward low complexity; sequence STSPQSPSSSTEN. The Helicase ATP-binding domain maps to 178–349; it reads DKRLLDGENC…ALRAFVYSTN (172 aa). ATP is bound at residue 191 to 198; the sequence is LPTGAGKT. Residues 295 to 298 carry the DEAH box motif; sequence DELH. The Helicase C-terminal domain maps to 392–596; the sequence is GICQLLAKLI…CVVLKLAENI (205 aa).

Belongs to the helicase family. SKI2 subfamily.

It localises to the nucleus. The protein localises to the chromosome. It carries out the reaction Couples ATP hydrolysis with the unwinding of duplex DNA by translocating in the 3'-5' direction.. The enzyme catalyses ATP + H2O = ADP + phosphate + H(+). Single-stranded 3'-5' DNA helicase that plays a key role in homology-driven double-strand break (DSB) repair. Involved in different DSB repair mechanisms that are guided by annealing of extensive stretches of complementary bases at break ends, such as microhomology-mediated end-joining (MMEJ), single-strand annealing (SSA) or synthesis-dependent strand annealing (SDSA). The chain is Helicase POLQ-like from Caenorhabditis elegans.